We begin with the raw amino-acid sequence, 332 residues long: NADH-quinone oxidoreductase subunit H (332 aa).

A run of 9 helical transmembrane segments spans residues 4-24 (FAFF…IFAS), 44-64 (IGPD…MIKL), 78-98 (FIFA…LAAI), 120-140 (VALL…FLGG), 165-185 (VGAL…LVDI), 194-214 (FSWL…ALFI), 255-275 (IAGA…FWII), 279-299 (IMMI…RAAF), and 312-332 (YLIL…AVLL).

The protein belongs to the complex I subunit 1 family. NDH-1 is composed of 14 different subunits. Subunits NuoA, H, J, K, L, M, N constitute the membrane sector of the complex.

It is found in the cell inner membrane. The catalysed reaction is a quinone + NADH + 5 H(+)(in) = a quinol + NAD(+) + 4 H(+)(out). Functionally, NDH-1 shuttles electrons from NADH, via FMN and iron-sulfur (Fe-S) centers, to quinones in the respiratory chain. The immediate electron acceptor for the enzyme in this species is believed to be ubiquinone. Couples the redox reaction to proton translocation (for every two electrons transferred, four hydrogen ions are translocated across the cytoplasmic membrane), and thus conserves the redox energy in a proton gradient. This subunit may bind ubiquinone. The protein is NADH-quinone oxidoreductase subunit H of Campylobacter jejuni (strain RM1221).